We begin with the raw amino-acid sequence, 105 residues long: Biogenesis of lysosome-related organelles complex 1 subunit SNN1 (105 aa).

Residues 70–105 adopt a coiled-coil conformation; it reads WKDDNERLDSLRKRVDSLKSRFQSLKLRSDKLEQRE.

This sequence belongs to the SNAPIN family. In terms of assembly, component of the biogenesis of lysosome-related organelles complex-1 (BLOC-1).

The protein localises to the endosome. Functionally, component of the biogenesis of lysosome-related organelles complex-1 (BLOC-1), a complex involved in endosomal cargo sorting. The polypeptide is Biogenesis of lysosome-related organelles complex 1 subunit SNN1 (SNN1) (Zygosaccharomyces rouxii (strain ATCC 2623 / CBS 732 / NBRC 1130 / NCYC 568 / NRRL Y-229)).